Reading from the N-terminus, the 324-residue chain is Methyltransferase pytC (324 aa).

Belongs to the methyltransferase superfamily. LaeA methyltransferase family.

The protein operates within secondary metabolite biosynthesis. Methyltransferase; part of the gene cluster that mediates the biosynthesis of pyranterreones, a family of antioxidative compounds. The first step of pyranonigrins biosynthesis is performed by the hybrid PKS-NRPS synthetase pytA that condenses 4 malonyl-CoA units ato the acetyl starter unit by the modular PKS of pytA. The acyl chain is then connected to an L-serine through the amide bond by the modular NRPS of pytA. A tetramic acid is formed and released from the PKS-NRPS pytA to give pyranterreone 5 with the help of the thioesterase pytI. Pyranterreone 5 could be methylated by pytC to afford pyranterreone 6. Both pyranterreones 5 and 6 are subsequently oxidized by the FAD-linked oxidoreductase pytB and the cytochrome P450 monooxygenase pytD to form the fused gamma-pyrone core, resulting in pyranterreones 7 and 11, respectively. The hydroxy group at C-8 of pyranterreones 7 and 11 are dehydrated by the aspartyl protease pytH to form a delta-7 double bond to give pyranterreones 3 and 1, 2 accordingly. The exo-methylene of pyranterreone 3 could be reduced into a pendant methyl by reductase pytE to provide pyranterreone 4, also known as cordylactam. Pyranterreone 4 can be reconverted to pyranterreone 3 through pytB-catalyzed dehydrogenation or further oxidized to pyranterreones 9 and 10. The protein is Methyltransferase pytC of Aspergillus terreus (strain NIH 2624 / FGSC A1156).